Reading from the N-terminus, the 388-residue chain is Arginine biosynthesis bifunctional protein ArgJ (388 aa).

Substrate-binding residues include Thr-150, Lys-172, Thr-183, Glu-263, Asn-383, and Ser-388. Thr-183 acts as the Nucleophile in catalysis.

Belongs to the ArgJ family. Heterotetramer of two alpha and two beta chains.

It is found in the cytoplasm. It catalyses the reaction N(2)-acetyl-L-ornithine + L-glutamate = N-acetyl-L-glutamate + L-ornithine. The enzyme catalyses L-glutamate + acetyl-CoA = N-acetyl-L-glutamate + CoA + H(+). Its pathway is amino-acid biosynthesis; L-arginine biosynthesis; L-ornithine and N-acetyl-L-glutamate from L-glutamate and N(2)-acetyl-L-ornithine (cyclic): step 1/1. It participates in amino-acid biosynthesis; L-arginine biosynthesis; N(2)-acetyl-L-ornithine from L-glutamate: step 1/4. In terms of biological role, catalyzes two activities which are involved in the cyclic version of arginine biosynthesis: the synthesis of N-acetylglutamate from glutamate and acetyl-CoA as the acetyl donor, and of ornithine by transacetylation between N(2)-acetylornithine and glutamate. The protein is Arginine biosynthesis bifunctional protein ArgJ of Corynebacterium glutamicum (strain ATCC 13032 / DSM 20300 / JCM 1318 / BCRC 11384 / CCUG 27702 / LMG 3730 / NBRC 12168 / NCIMB 10025 / NRRL B-2784 / 534).